Consider the following 115-residue polypeptide: LSM complex subunit LSM7 (115 aa).

The segment covering 1-10 (MHQQHSKSEN) has biased composition (basic and acidic residues). The tract at residues 1-23 (MHQQHSKSENKPQQQRKKFEGPK) is disordered. The Sm domain occupies 25–108 (EAILDLAKYK…LVSLSSAEGS (84 aa)).

Belongs to the snRNP Sm proteins family. As to quaternary structure, component of the heptameric LSM1-LSM7 complex that forms a seven-membered ring structure with a donut shape. The LSm subunits are arranged in the order LSM1, LSM2, LSM3, LSM6, LSM5, LSM7 and LSM4. Except for LSM1, where a C-terminal helix crosses the ring structure to form additional interactions with LSM3 and LSM6, each subunit interacts only with its two neighboring subunits. The LSM1-LSM7 complex interacts with PAT1; within the complex PAT1 has direct interactions with LSM2 and LSM3. The LSM1-LSM7 complex interacts with XRN1. Component of the heptameric LSM2-LSM8 complex that forms a seven-membered ring structure with a donut shape; an RNA strand can pass through the hole in the center of the ring structure. The LSm subunits are arranged in the order LSM8, LSM2, LSM3, LSM6, LSM5, LSM7 and LSM4. Component of the spliceosome U4/U6-U5 tri-snRNP complex composed of the U4, U6 and U5 snRNAs and at least PRP3, PRP4, PRP6, PRP8, PRP18, PRP31, PRP38, SNU13, SNU23, SNU66, SNU114, SPP381, SMB1, SMD1, SMD2, SMD3, SMX2, SMX3, LSM2, LSM3, LSM4, LSM5, LSM6, LSM7, LSM8, BRR2 and DIB1. May be found in a complex comprising LSM2-LSM7 without LSM1 or LSM8; the complex associates with pre-P RNA and snoRNA SNR5.

The protein resides in the nucleus. Its subcellular location is the nucleolus. The protein localises to the cytoplasm. In terms of biological role, component of LSm protein complexes, which are involved in RNA processing and may function in a chaperone-like manner. Component of the cytoplasmic LSM1-LSM7 complex which is involved in mRNA degradation by activating the decapping step. Together with PAT1, the LSM1-LSM7 complex binds to osmotic stress-activated mRNAs to attenuate the osmotic stress response, probably by limiting ribosome access to the mRNA and consequently translation. Component of the nuclear LSM2-LSM8 complex, which is involved in spliceosome assembly. The LSM2-LSM8 complex plays a role in the biogenesis of the spliceosomal U4/U6-U5 tri-snRNP complex by accelerating PRP24-mediated annealing of U4/U6 di-snRNA. The LSM2-LSM8 complex binds U6 snRNA terminating with a non-cyclic 3' phosphate group. LSM2-LSM8 is probably also involved in degradation of nuclear pre-mRNA by targeting them for decapping. LSM2-LSM8 could be involved in processing of pre-tRNAs, pre-rRNAs and U3 snoRNA, although involvement may be indirect. In a complex that probably contains LSM2-LSM7, but not LSM1 or LSM8, associates with the precursor of the RNA component of RNase P (pre-P RNA) and may be involved in maturing pre-P RNA; the complex also associates with snoRNA SNR5. The chain is LSM complex subunit LSM7 (LSM7) from Saccharomyces cerevisiae (strain ATCC 204508 / S288c) (Baker's yeast).